The primary structure comprises 329 residues: MWGLKVLLLPVVSFALHPEEILDTQWELWKKTYSKQYNSKVDEISRRLIWEKNLKHISIHNLEASLGVHTYELAMNHLGDMTSEEVVQKMTGLKVPPSRSHSNDTLYIPDWEGRTPDSIDYRKKGYVTPVKNQGQCGSCWAFSSVGALEGQLKKKTGKLLNLSPQNLVDCVSENYGCGGGYMTNAFQYVQRNRGIDSEDAYPYVGQDESCMYNPTGKAAKCRGYREIPEGNEKALKRAVARVGPVSVAIDASLTSFQFYSKGVYYDENCSSDNVNHAVLAVGYGIQKGNKHWIIKNSWGESWGNKGYILMARNKNNACGIANLASFPKM.

The N-terminal stretch at 1–15 is a signal peptide; that stretch reads MWGLKVLLLPVVSFA. Residues 16–114 constitute a propeptide, activation peptide; sequence LHPEEILDTQ…TLYIPDWEGR (99 aa). N-linked (GlcNAc...) asparagine glycosylation is present at Asn-103. 2 disulfides stabilise this stretch: Cys-136/Cys-177 and Cys-170/Cys-210. Residue Cys-139 is part of the active site. Asn-268 carries N-linked (GlcNAc...) asparagine glycosylation. A disulfide bridge links Cys-269 with Cys-318. Active-site residues include His-276 and Asn-296.

It belongs to the peptidase C1 family. In terms of tissue distribution, predominantly expressed in osteclasts (bones).

The protein localises to the lysosome. Its subcellular location is the secreted. It localises to the apical cell membrane. The catalysed reaction is Broad proteolytic activity. With small-molecule substrates and inhibitors, the major determinant of specificity is P2, which is preferably Leu, Met &gt; Phe, and not Arg.. Functionally, thiol protease involved in osteoclastic bone resorption and may participate partially in the disorder of bone remodeling. Displays potent endoprotease activity against fibrinogen at acid pH. May play an important role in extracellular matrix degradation. Involved in the release of thyroid hormone thyroxine (T4) by limited proteolysis of TG/thyroglobulin in the thyroid follicle lumen. The sequence is that of Cathepsin K (CTSK) from Oryctolagus cuniculus (Rabbit).